The primary structure comprises 195 residues: MAKHKRKGLEGTGKESKRQKITPAEETPRTSEAGPDKETASTLVQEASPELSPEERRVLERKLKKERKKEEKKRLREAGIAATQTAKVQTLPAKPSAATLALEYLQGWAQKQESWRFQKTRQTWLLLHMYDEDKVPDEHFPTLLDYLEGLRGSARELTVRKAEALMQKLDEAEPEDSGGSPGKVQRLRQVLQLLS.

The disordered stretch occupies residues 1–78 (MAKHKRKGLE…KEEKKRLREA (78 aa)). Composition is skewed to basic and acidic residues over residues 8–18 (GLEGTGKESKR) and 26–39 (ETPR…DKET). S41, S48, and S52 each carry phosphoserine. The span at 53-77 (PEERRVLERKLKKERKKEEKKRLRE) shows a compositional bias: basic and acidic residues. S96 is subject to Phosphoserine.

As to expression, secreted via exosomes, secreted from the instestine, secretion is induced by feeding and cholesterol absorption. Expressed in enterocytes.

It localises to the secreted. Hormone secreted from the intestine in response to cholesterol, where it acts to inhibit cholesterol synthesis in the liver and VLDL secretion,leading to a reduction in circulating cholesterol levels. Acts through binding to its receptor, GPR146. This is Cholesin (Chlsn) from Mus musculus (Mouse).